A 466-amino-acid polypeptide reads, in one-letter code: Ferrochelatase-1, chloroplastic/mitochondrial (466 aa).

A compositionally biased stretch (polar residues) spans 1–11; the sequence is MQATALSSGFN. The interval 1–23 is disordered; the sequence is MQATALSSGFNPLTKRKDHRFPR. The transit peptide at 1 to 35 directs the protein to the chloroplast and mitochondrion; that stretch reads MQATALSSGFNPLTKRKDHRFPRSCSQRNSLSLIQ.

The protein belongs to the ferrochelatase family. Expressed in roots, leaves, stems and flowers. Present in both leaves and roots.

Its subcellular location is the plastid. It is found in the chloroplast membrane. It localises to the chloroplast thylakoid membrane. The protein localises to the mitochondrion. The enzyme catalyses heme b + 2 H(+) = protoporphyrin IX + Fe(2+). It functions in the pathway porphyrin-containing compound metabolism; protoheme biosynthesis; protoheme from protoporphyrin-IX: step 1/1. Its function is as follows. Catalyzes the last step of heme biosynthesis by inserting ferrous iron into protoporphyrin IX to produce protoheme. Produces heme for photosynthetic cytochromes, but does not seem to be involved in stress responses. May be involved in wound-induced supply of heme to defensive hemoproteins outside plastids. Regulates the expression of photosynthesis-associated nuclear genes in undeveloped chloroplasts through production of heme. The chain is Ferrochelatase-1, chloroplastic/mitochondrial from Arabidopsis thaliana (Mouse-ear cress).